A 514-amino-acid polypeptide reads, in one-letter code: ATP synthase subunit alpha (514 aa).

170 to 177 (GDRQTGKT) is a binding site for ATP.

It belongs to the ATPase alpha/beta chains family. F-type ATPases have 2 components, CF(1) - the catalytic core - and CF(0) - the membrane proton channel. CF(1) has five subunits: alpha(3), beta(3), gamma(1), delta(1), epsilon(1). CF(0) has three main subunits: a(1), b(2) and c(9-12). The alpha and beta chains form an alternating ring which encloses part of the gamma chain. CF(1) is attached to CF(0) by a central stalk formed by the gamma and epsilon chains, while a peripheral stalk is formed by the delta and b chains.

The protein resides in the cell inner membrane. It catalyses the reaction ATP + H2O + 4 H(+)(in) = ADP + phosphate + 5 H(+)(out). In terms of biological role, produces ATP from ADP in the presence of a proton gradient across the membrane. The alpha chain is a regulatory subunit. The chain is ATP synthase subunit alpha from Acinetobacter baumannii (strain AB307-0294).